The chain runs to 687 residues: Phenylalanine aminomutase (L-beta-phenylalanine forming) (687 aa).

Tyrosine 80 serves as the catalytic Proton donor/acceptor. The 5-imidazolinone (Ala-Gly) cross-link spans 175-177 (ASG). Residue serine 176 is modified to 2,3-didehydroalanine (Ser). (E)-cinnamate is bound by residues asparagine 231, glutamine 319, arginine 325, asparagine 355, lysine 427, glutamate 455, and asparagine 458.

Belongs to the PAL/histidase family. In terms of assembly, homodimer. Homotetramer, dimer of dimers. Post-translationally, contains an active site 4-methylidene-imidazol-5-one (MIO), which is formed autocatalytically by cyclization and dehydration of residues Ala-Ser-Gly.

It is found in the cytoplasm. It carries out the reaction L-phenylalanine = L-beta-phenylalanine. The catalysed reaction is L-phenylalanine = (E)-cinnamate + NH4(+). It participates in alkaloid biosynthesis; taxol biosynthesis. It functions in the pathway phenylpropanoid metabolism; trans-cinnamate biosynthesis; trans-cinnamate from L-phenylalanine: step 1/1. In terms of biological role, phenylalanine aminomutase that catalyzes the rearrangement of L-phenylalanine to R-beta-phenylalanine. Catalyzes the first committed step in the biosynthesis of the side chain of the alkaloid taxol (paclitaxel), a widely-used compound with antitumor activity. Also has low phenylalanine ammonia-lyase activity and can catalyze the amination of trans-cinnamate. The protein is Phenylalanine aminomutase (L-beta-phenylalanine forming) (pam) of Taxus chinensis (Chinese yew).